The following is a 580-amino-acid chain: Phosphatase and actin regulator 1 (580 aa).

Phosphoserine is present on residues serine 67 and serine 78. Threonine 104 carries the post-translational modification Phosphothreonine. The Nuclear localization signal motif lies at 108-129 (RRRSKFANLGRIFKPWKWRKKK). The RPEL 1 repeat unit spans residues 138 to 163 (AALERKISMRQSREELIKRGVLKEIY). Disordered regions lie at residues 330-350 (SEQR…SSDG) and 374-408 (DNKE…DDAS). Residues 337 to 348 (STSYHSSGLHSS) are compositionally biased toward low complexity. Residues 374 to 383 (DNKENVPHEP) are compositionally biased toward basic and acidic residues. Positions 395–407 (EEEEEEEDEDDDA) are enriched in acidic residues. 3 RPEL repeats span residues 422-447 (DSLA…PRQT), 460-485 (TKLT…KPRN), and 498-523 (RRLT…IRFS). A disordered region spans residues 463-494 (TRRLSQRPTAEELEQRNILKPRNEQEEQEEKR). Phosphoserine is present on serine 467. Basic and acidic residues predominate over residues 471-494 (TAEELEQRNILKPRNEQEEQEEKR). A Phosphoserine modification is found at serine 505.

Belongs to the phosphatase and actin regulator family. In terms of assembly, interacts (via RPEL repeats) with ACTA1 and PPP1CA; ACTA1 and PPP1CA compete for the same binding site.

It localises to the cytoplasm. The protein resides in the synapse. The protein localises to the nucleus. Binds actin monomers (G actin) and plays a role in multiple processes including the regulation of actin cytoskeleton dynamics, actin stress fibers formation, cell motility and survival, formation of tubules by endothelial cells, and regulation of PPP1CA activity. Involved in the regulation of cortical neuron migration and dendrite arborization. This is Phosphatase and actin regulator 1 (Phactr1) from Mus musculus (Mouse).